The sequence spans 494 residues: Transcription factor SOX-9 (494 aa).

Disordered stretches follow at residues M1–E66 and E159–V275. The span at S27–D42 shows a compositional bias: low complexity. 2 stretches are compositionally biased toward basic and acidic residues: residues G56–E66 and E159–Y174. Residues E63–P103 are dimerization (DIM). The tract at residues E63 to P103 is PQA. The residue at position 64 (S64) is a Phosphoserine. The segment at residues V105–K173 is a DNA-binding region (HMG box). S181 carries the post-translational modification Phosphoserine. Residues S211–H222 are compositionally biased toward low complexity. The tract at residues P224–P309 is transactivation domain (TAM). Short sequence motifs (9aaTAD) lie at residues I277 to S286 and D292 to L300. A compositionally biased stretch (low complexity) spans S326–A337. A disordered region spans residues S326 to Q402. The span at P344–P353 shows a compositional bias: pro residues. Residues R372–P494 are transactivation domain (TAC). K376 is covalently cross-linked (Glycyl lysine isopeptide (Lys-Gly) (interchain with G-Cter in SUMO)). Over residues E378–E387 the composition is skewed to polar residues. The span at Q388–Q402 shows a compositional bias: low complexity. The short motif at G445–Y453 is the 9aaTAD 3 element. The tract at residues Y462 to P494 is disordered. Residues G470–P494 are compositionally biased toward polar residues.

In terms of assembly, interacts with SNAI2; triggers neural crest delamination in a phosphorylation dependent manner. Interacts with UBE2I. Phosphorylated at Ser-181 in the developing neural tube. Phosphorylation at either Ser-64 or Ser-181 is required for sumoylation, but phosphorylation is not dependent on sumoylation. Sumoylation is enhanced by PKA. Phosphorylation is required for interaction with SNAI2 to trigger neural crest delamination and for an efficient trunk neural crest delamination, whereas sumoylation plays a less significant role. Phosphorylation and sumoylation are induced by BMP signaling pathway. In terms of processing, sumoylated at Lys-376; phosphorylation at either Ser-64 or Ser-181 is required for sumoylation. Sumoylation is induced by BMP signaling pathway.

The protein resides in the nucleus. Its function is as follows. Transcription factor that plays a key role in chondrocytes differentiation and skeletal development. Specifically binds the 5'-ACAAAG-3' DNA motif present in enhancers and super-enhancers and promotes expression of genes important for chondrogenesis, including COL2A1. Plays a central role in successive steps of chondrocyte differentiation. Absolutely required for precartilaginous condensation, the first step in chondrogenesis during which skeletal progenitors differentiate into prechondrocytes. Together with SOX5 and SOX6, required for overt chondrogenesis when condensed prechondrocytes differentiate into early stage chondrocytes, the second step in chondrogenesis. Later, required to direct hypertrophic maturation and block osteoblast differentiation of growth plate chondrocytes: maintains chondrocyte columnar proliferation, delays prehypertrophy and then prevents osteoblastic differentiation of chondrocytes. Also required for chondrocyte hypertrophy, both indirectly, by keeping the lineage fate of chondrocytes, and directly, by remaining present in upper hypertrophic cells. Low lipid levels are the main nutritional determinant for chondrogenic commitment of skeletal progenitor cells: when lipids levels are low, FOXO transcription factors promote expression of SOX9, which induces chondrogenic commitment and suppresses fatty acid oxidation. In addition to cartilage development, also acts as a regulator of proliferation and differentiation in epithelial stem/progenitor cells. In response to bone morphogenetic protein stimulus, phosphorylation is induced and then sumoylation, allowing cooperation with SNAI2 to trigger neural crest delamination. The chain is Transcription factor SOX-9 from Gallus gallus (Chicken).